Reading from the N-terminus, the 708-residue chain is Metal-pseudopaline receptor CntO (708 aa).

An N-terminal signal peptide occupies residues 1–21 (MRVSVSLVLGVGLGCSSPALW). The TBDR plug domain occupies 63-169 (RIEDIPQAIS…PGGTVNLVTK (107 aa)). The region spanning 174-708 (ERFARLHASA…NLTMSLTLNY (535 aa)) is the TBDR beta-barrel domain.

This sequence belongs to the TonB-dependent receptor family.

Its subcellular location is the cell outer membrane. Its function is as follows. Transports the metallophore pseudopaline, which is involved in the acquisition of nickel and zinc, and thus enables bacterial growth inside the host, where metal access is limited. Is probably involved in the import of pseudopaline-metal complexes. In Pseudomonas aeruginosa (strain ATCC 15692 / DSM 22644 / CIP 104116 / JCM 14847 / LMG 12228 / 1C / PRS 101 / PAO1), this protein is Metal-pseudopaline receptor CntO.